The sequence spans 201 residues: MELVLQDTQKSLTVSNNIFGYRFNEALIHQVIVAYAAHTRSGNHAQKSRAEVVGSNKKPWRQKGTGRARAGTVKSPLWRSGGVTFAAKPRDYSQKINKKMYRGALKSIFSELIRQKRLIVVEQFCIQAPKTKLLVDKLKKITLKKVLIITHLLELNLLLAARNLYTVEICDIANINLISLVTFDQVIITANSIKQIEERLI.

A disordered region spans residues 45-66; that stretch reads AQKSRAEVVGSNKKPWRQKGTG.

It belongs to the universal ribosomal protein uL4 family. In terms of assembly, part of the 50S ribosomal subunit.

Its function is as follows. One of the primary rRNA binding proteins, this protein initially binds near the 5'-end of the 23S rRNA. It is important during the early stages of 50S assembly. It makes multiple contacts with different domains of the 23S rRNA in the assembled 50S subunit and ribosome. In terms of biological role, forms part of the polypeptide exit tunnel. The sequence is that of Large ribosomal subunit protein uL4 from Baumannia cicadellinicola subsp. Homalodisca coagulata.